The chain runs to 70 residues: Large ribosomal subunit protein bL31 (70 aa).

Zn(2+) contacts are provided by Cys16, Cys18, Cys36, and Cys39.

Belongs to the bacterial ribosomal protein bL31 family. Type A subfamily. Part of the 50S ribosomal subunit. The cofactor is Zn(2+).

Binds the 23S rRNA. This chain is Large ribosomal subunit protein bL31, found in Tolumonas auensis (strain DSM 9187 / NBRC 110442 / TA 4).